The following is a 264-amino-acid chain: Small ribosomal subunit protein eS1B (264 aa).

Residues 1–19 (MALGKNKRISKGGKRGKRG) show a composition bias toward basic residues. Residues 1–23 (MALGKNKRISKGGKRGKRGKAQE) form a disordered region.

It belongs to the eukaryotic ribosomal protein eS1 family. As to quaternary structure, component of the small ribosomal subunit. Mature ribosomes consist of a small (40S) and a large (60S) subunit. The 40S subunit contains about 33 different proteins and 1 molecule of RNA (18S). The 60S subunit contains about 49 different proteins and 3 molecules of RNA (25S, 5.8S and 5S).

It is found in the cytoplasm. This is Small ribosomal subunit protein eS1B from Leishmania infantum.